Reading from the N-terminus, the 387-residue chain is 3-ketoacyl-CoA thiolase (387 aa).

The active-site Acyl-thioester intermediate is Cys91. Active-site proton acceptor residues include His343 and Cys373.

The protein belongs to the thiolase-like superfamily. Thiolase family. In terms of assembly, heterotetramer of two alpha chains (FadB) and two beta chains (FadA).

It is found in the cytoplasm. The enzyme catalyses an acyl-CoA + acetyl-CoA = a 3-oxoacyl-CoA + CoA. Its pathway is lipid metabolism; fatty acid beta-oxidation. Catalyzes the final step of fatty acid oxidation in which acetyl-CoA is released and the CoA ester of a fatty acid two carbons shorter is formed. This chain is 3-ketoacyl-CoA thiolase, found in Vibrio vulnificus (strain YJ016).